We begin with the raw amino-acid sequence, 211 residues long: Small ribosomal subunit protein uS3 (211 aa).

The 69-residue stretch at 38–106 folds into the KH type-2 domain; the sequence is LRNFLKKRLY…EIYLNIQEVR (69 aa).

It belongs to the universal ribosomal protein uS3 family. Part of the 30S ribosomal subunit. Forms a tight complex with proteins S10 and S14.

Functionally, binds the lower part of the 30S subunit head. Binds mRNA in the 70S ribosome, positioning it for translation. In Geobacter sulfurreducens (strain ATCC 51573 / DSM 12127 / PCA), this protein is Small ribosomal subunit protein uS3.